Consider the following 128-residue polypeptide: Glycine cleavage system H protein (128 aa).

The Lipoyl-binding domain maps to 22 to 104 (VATVGITEHA…YGEGWIFKMK (83 aa)). K63 is modified (N6-lipoyllysine).

This sequence belongs to the GcvH family. As to quaternary structure, the glycine cleavage system is composed of four proteins: P, T, L and H. The cofactor is (R)-lipoate.

Its function is as follows. The glycine cleavage system catalyzes the degradation of glycine. The H protein shuttles the methylamine group of glycine from the P protein to the T protein. The polypeptide is Glycine cleavage system H protein (Methylacidiphilum infernorum (isolate V4) (Methylokorus infernorum (strain V4))).